The primary structure comprises 198 residues: Adenylyl-sulfate kinase (198 aa).

Position 31–38 (31–38) interacts with ATP; that stretch reads GLSGAGKS. Residue Ser-105 is the Phosphoserine intermediate of the active site.

This sequence belongs to the APS kinase family.

It carries out the reaction adenosine 5'-phosphosulfate + ATP = 3'-phosphoadenylyl sulfate + ADP + H(+). The protein operates within sulfur metabolism; hydrogen sulfide biosynthesis; sulfite from sulfate: step 2/3. Catalyzes the synthesis of activated sulfate. The chain is Adenylyl-sulfate kinase from Shewanella amazonensis (strain ATCC BAA-1098 / SB2B).